The sequence spans 568 residues: PWWP domain-containing protein2 (568 aa).

Over residues 1–19 (MTEIKDSSVKDENPGKQEE) the composition is skewed to basic and acidic residues. 3 disordered regions span residues 1–126 (MTEI…YKPG), 213–340 (QSTP…DVAK), and 465–568 (IASL…TGQK). Polar residues predominate over residues 29-46 (MSTATNNSKNIETTSSNG). Basic and acidic residues-rich tracts occupy residues 48-88 (EDIK…KTIE) and 100-122 (KSQK…ERVN). A PWWP domain is found at 125–189 (PGMRVLTKMS…SDSLTPLTSE (65 aa)). Over residues 214–228 (STPDLDSLSVPSSES) the composition is skewed to low complexity. Residues 229 to 249 (EVSEEESDQEMSEPSPIEEDY) show a composition bias toward acidic residues. Positions 255–266 (RRITRKGTKKKT) are enriched in basic residues. Polar residues predominate over residues 281-292 (LNASSNVSSNPA). The span at 325 to 336 (KEEEEGSVANEE) shows a compositional bias: acidic residues. Composition is skewed to basic and acidic residues over residues 489-500 (KQNEDNEDKVKA) and 514-541 (DASK…KDFA).

This is PWWP domain-containing protein2 (pdp2) from Schizosaccharomyces pombe (strain 972 / ATCC 24843) (Fission yeast).